The following is a 966-amino-acid chain: RNA polymerase-associated protein RapA (966 aa).

Positions 163 to 337 (EVGQRLHPRV…FARLKLLDAD (175 aa)) constitute a Helicase ATP-binding domain. 176 to 183 (DEVGLGKT) contributes to the ATP binding site. The short motif at 283–286 (DEAH) is the DEAH box element. Residues 488-642 (RVEWLITFLK…ICPMGMALFE (155 aa)) form the Helicase C-terminal domain.

Belongs to the SNF2/RAD54 helicase family. RapA subfamily. In terms of assembly, interacts with the RNAP. Has a higher affinity for the core RNAP than for the holoenzyme. Its ATPase activity is stimulated by binding to RNAP.

In terms of biological role, transcription regulator that activates transcription by stimulating RNA polymerase (RNAP) recycling in case of stress conditions such as supercoiled DNA or high salt concentrations. Probably acts by releasing the RNAP, when it is trapped or immobilized on tightly supercoiled DNA. Does not activate transcription on linear DNA. Probably not involved in DNA repair. The polypeptide is RNA polymerase-associated protein RapA (Actinobacillus succinogenes (strain ATCC 55618 / DSM 22257 / CCUG 43843 / 130Z)).